The following is a 358-amino-acid chain: Ion-translocating oxidoreductase complex subunit D (358 aa).

7 helical membrane-spanning segments follow: residues 16–36, 38–58, 68–90, 128–148, 206–226, 236–256, and 286–306; these read VSRT…FGLW, FGWP…VFEV, IRPF…TLPP, AMLV…VGLL, FVPG…GLLL, IPLA…FLAP, and PVTT…VFVI.

It belongs to the NqrB/RnfD family. The complex is composed of six subunits: RnfA, RnfB, RnfC, RnfD, RnfE and RnfG. The cofactor is FMN.

The protein resides in the cellular chromatophore membrane. Its function is as follows. Part of a membrane-bound complex that couples electron transfer with translocation of ions across the membrane. Required for nitrogen fixation. Involved in electron transfer to nitrogenase. The polypeptide is Ion-translocating oxidoreductase complex subunit D (Rhodobacter capsulatus (Rhodopseudomonas capsulata)).